The sequence spans 731 residues: Ubiquitin carboxyl-terminal hydrolase 17 (731 aa).

Residues Cys57, Cys60, Cys68, Cys71, Cys77, Cys81, His90, and Cys94 each coordinate Zn(2+). Residues 57–94 form an MYND-type zinc finger; that stretch reads CAVCLYPTTTRCSQCKSVRYCSSKCQILHWRRGHKEEC. Disordered regions lie at residues 171 to 219 and 262 to 281; these read YETR…DSAN and LPSK…SGLK. Composition is skewed to polar residues over residues 207-219 and 265-281; these read GNQN…DSAN and KANS…SGLK. The 305-residue stretch at 329–633 folds into the USP domain; sequence FGLVNLGNSC…GAYMLLYARD (305 aa). Cys338 functions as the Nucleophile in the catalytic mechanism. Catalysis depends on His592, which acts as the Proton acceptor. A disordered region spans residues 637–702; it reads PVSKNGGRKS…TSSCSTKDSS (66 aa). The span at 677-701 shows a compositional bias: low complexity; it reads DWSSGSLSSMFSSSDTTSSCSTKDS.

The protein belongs to the peptidase C19 family.

It carries out the reaction Thiol-dependent hydrolysis of ester, thioester, amide, peptide and isopeptide bonds formed by the C-terminal Gly of ubiquitin (a 76-residue protein attached to proteins as an intracellular targeting signal).. Its function is as follows. Recognizes and hydrolyzes the peptide bond at the C-terminal Gly of ubiquitin. Involved in the processing of poly-ubiquitin precursors as well as that of ubiquitinated proteins. The protein is Ubiquitin carboxyl-terminal hydrolase 17 (UBP17) of Arabidopsis thaliana (Mouse-ear cress).